A 131-amino-acid chain; its full sequence is Large ribosomal subunit protein uL22 (131 aa).

The protein belongs to the universal ribosomal protein uL22 family. In terms of assembly, part of the 50S ribosomal subunit.

Its function is as follows. This protein binds specifically to 23S rRNA; its binding is stimulated by other ribosomal proteins, e.g. L4, L17, and L20. It is important during the early stages of 50S assembly. It makes multiple contacts with different domains of the 23S rRNA in the assembled 50S subunit and ribosome. Functionally, the globular domain of the protein is located near the polypeptide exit tunnel on the outside of the subunit, while an extended beta-hairpin is found that lines the wall of the exit tunnel in the center of the 70S ribosome. In Phytoplasma mali (strain AT), this protein is Large ribosomal subunit protein uL22.